The following is a 354-amino-acid chain: MQFSPVVASPKLLLQLCISTLHCIMASIISTVCYWTAGACKGTTSPVPPVDSNLDQRKVQNAMTPTSVNYHFTRKCNYKCGFCFHTAKTSFVLPLEEAKRGLKLLKESGMEKINFSGGEPFLHEKGEFLGKLVQFCKLDLQLPSVSIVSNGSMIKEKWFQKYGDYLDILAISCDSFDEATNQLIGRTQGRKSHVDNLHKIRNWCQQYKVAFKINSVINTFNMDEDMTEPITQLNPVRWKVFQCLLIDGENAGEEALREAERFVISDQLFQEFLDRHSSISCLVPESNEKMRNSYLILDEYMRFLDCRAGRKDPSKSILDVGVKDAISFSGFDEKMFLKRGGKYVWSKANMKLQW.

The region spanning 62 to 282 is the Radical SAM core domain; that stretch reads AMTPTSVNYH…LDRHSSISCL (221 aa). [4Fe-4S] cluster-binding residues include C76, C80, and C83.

The protein belongs to the radical SAM superfamily. RSAD2 family. Requires [4Fe-4S] cluster as cofactor. Constitutively expressed in spleen, head kidney and trunk kidney. Following viral infection, detected in most organs including liver, gill, intestine, heart, muscle and brain.

The protein localises to the endoplasmic reticulum membrane. Its function is as follows. Interferon-inducible iron-sulfur (4FE-4S) cluster-binding antiviral protein which plays a major role in the cell antiviral state induced by type I and type II interferon. This is S-adenosylmethionine-dependent nucleotide dehydratase RSAD2 from Siniperca chuatsi (Mandarin fish).